The sequence spans 664 residues: Cyclic nucleotide-gated channel alpha-2 (664 aa).

Residues 1–11 (MTEKTNGVKSS) are compositionally biased toward polar residues. Positions 1–49 (MTEKTNGVKSSPANNHNHHAPPAIKANGKDDHRTSSRPHSAADDDTSSE) are disordered. Residues 1–144 (MTEKTNGVKS…PAGDWYYCWL (144 aa)) are Cytoplasmic-facing. Residues 12–23 (PANNHNHHAPPA) are compositionally biased toward low complexity. Residues 145-166 (FVIAMPVLYNWCLLVARACFSD) traverse the membrane as a helical segment. Residues 167–176 (LQKGYYLVWL) are Extracellular-facing. The helical transmembrane segment at 177-197 (VLDYVSDVVYIADLFIRLRTG) threads the bilayer. Over 198-222 (FLEQGLLVKDTKKLRDNYIHTLQFK) the chain is Cytoplasmic. The chain crosses the membrane as a helical span at residues 223-241 (LDVASIIPTDLIYFAVDIH). The Extracellular segment spans residues 242–246 (SPEVR). Residues 247-265 (FNRLLHFARMFEFFDRTET) form a helical membrane-spanning segment. Over 266–272 (RTNYPNI) the chain is Cytoplasmic. The ion conduction pathway stretch occupies residues 270–378 (PNIFRISNLV…GNVGSMISNM (109 aa)). Residues 273–296 (FRISNLVLYILVIIHWNACIYYAI) traverse the membrane as a helical segment. Residues 297-319 (SKSIGFGVDTWVYPNITDPEYGY) are Extracellular-facing. Transmembrane regions (helical) follow at residues 320-354 (LAREYIYCLYWSTLTLTTIGETPPPVKDEEYLFVI) and 355-379 (FDFLIGVLIFATIVGNVGSMISNMN). A selectivity filter region spans residues 337 to 340 (TIGE). A C-linker region spans residues 380–456 (ATRAEFQAKI…STLKKVRIFH (77 aa)). Over 380-664 (ATRAEFQAKI…SPELAAADEP (285 aa)) the chain is Cytoplasmic. The tract at residues 460 to 580 (AGLLVELVLK…EERGREILMK (121 aa)) is cyclic nucleotide-binding domain. 3',5'-cyclic GMP contacts are provided by Gly520, Ser523, Arg536, and Thr537. 3',5'-cyclic AMP-binding residues include Arg536 and Thr537. A coiled-coil region spans residues 597-651 (VQEKLGQLETNMETLYTRFGRLLAEYTGAQQKLKQRITVLETKMKQNNEDDYLSD). The interval 641 to 664 (KQNNEDDYLSDGMNSPELAAADEP) is disordered.

The protein belongs to the cyclic nucleotide-gated cation channel (TC 1.A.1.5) family. CNGA2 subfamily. The olfactory cyclic nucleotide-gated channel is an heterotetramer composed of CNGA2, CNGA4 and CNGB1b subunits with 2:1:1 stoichiometry.

It localises to the cell projection. The protein localises to the cilium membrane. It carries out the reaction Ca(2+)(in) = Ca(2+)(out). The catalysed reaction is Na(+)(in) = Na(+)(out). It catalyses the reaction K(+)(in) = K(+)(out). The enzyme catalyses NH4(+)(in) = NH4(+)(out). It carries out the reaction Rb(+)(in) = Rb(+)(out). The catalysed reaction is Li(+)(in) = Li(+)(out). It catalyses the reaction Cs(+)(in) = Cs(+)(out). Its function is as follows. Pore-forming subunit of the olfactory cyclic nucleotide-gated channel. Operates in the cilia of olfactory sensory neurons where chemical stimulation of the odorant is converted to an electrical signal. Mediates odorant-induced cAMP-dependent Ca(2+) influx triggering neuron depolarization. The rise of intracellular Ca(2+) levels potentiates the olfactory response by activating Ca(2+)-dependent Cl(-) channels, but it also serves as a negative feedback signal to desensitize the channel for rapid adaptation to odorants. Conducts cAMP- and cGMP-gated ion currents, with permeability for monovalent and divalent cations. The polypeptide is Cyclic nucleotide-gated channel alpha-2 (Homo sapiens (Human)).